The primary structure comprises 482 residues: Membrane-bound lytic murein transglycosylase F (482 aa).

The signal sequence occupies residues 1–18 (MKGLFLRIITALALLFWA). A non-LT domain region spans residues 19–267 (IDMVFPWQFL…NLKEKYLGHI (249 aa)). An LT domain region spans residues 268 to 482 (SQFDYVDTRS…NLEEIKENED (215 aa)). Glu312 is a catalytic residue. Residues 457–470 (ENQTTNDNANNESA) show a composition bias toward polar residues. A disordered region spans residues 457–482 (ENQTTNDNANNESAVKNLEEIKENED). The span at 473-482 (NLEEIKENED) shows a compositional bias: basic and acidic residues.

The protein in the N-terminal section; belongs to the bacterial solute-binding protein 3 family. This sequence in the C-terminal section; belongs to the transglycosylase Slt family.

The protein resides in the cell outer membrane. The enzyme catalyses Exolytic cleavage of the (1-&gt;4)-beta-glycosidic linkage between N-acetylmuramic acid (MurNAc) and N-acetylglucosamine (GlcNAc) residues in peptidoglycan, from either the reducing or the non-reducing ends of the peptidoglycan chains, with concomitant formation of a 1,6-anhydrobond in the MurNAc residue.. Functionally, murein-degrading enzyme that degrades murein glycan strands and insoluble, high-molecular weight murein sacculi, with the concomitant formation of a 1,6-anhydromuramoyl product. Lytic transglycosylases (LTs) play an integral role in the metabolism of the peptidoglycan (PG) sacculus. Their lytic action creates space within the PG sacculus to allow for its expansion as well as for the insertion of various structures such as secretion systems and flagella. The protein is Membrane-bound lytic murein transglycosylase F of Haemophilus influenzae (strain PittGG).